The sequence spans 303 residues: UDP-N-acetylenolpyruvoylglucosamine reductase (303 aa).

The 168-residue stretch at 29-196 (KIGGPADVLV…LEAVLQLEQK (168 aa)) folds into the FAD-binding PCMH-type domain. R174 is a catalytic residue. The Proton donor role is filled by S225. The active site involves E295.

Belongs to the MurB family. Requires FAD as cofactor.

It localises to the cytoplasm. The catalysed reaction is UDP-N-acetyl-alpha-D-muramate + NADP(+) = UDP-N-acetyl-3-O-(1-carboxyvinyl)-alpha-D-glucosamine + NADPH + H(+). It functions in the pathway cell wall biogenesis; peptidoglycan biosynthesis. Functionally, cell wall formation. The sequence is that of UDP-N-acetylenolpyruvoylglucosamine reductase from Bacillus licheniformis (strain ATCC 14580 / DSM 13 / JCM 2505 / CCUG 7422 / NBRC 12200 / NCIMB 9375 / NCTC 10341 / NRRL NRS-1264 / Gibson 46).